A 1615-amino-acid chain; its full sequence is Ras-responsive element-binding protein 1 (1615 aa).

The interval 1–44 is disordered; that stretch reads MMSAVMNVGKIAENGGTSQTVKSPSKSPAPNRIGRRNQETKEEK. The span at 15 to 28 shows a compositional bias: polar residues; the sequence is GGTSQTVKSPSKSP. 3 C2H2-type zinc fingers span residues 47 to 69, 78 to 100, and 106 to 128; these read YTCPLCEKICTTQHQLTMHIRQH, HSCSICGKSLSSASSLDRHMLVH, and YKCSVCGQSFTTNGNMHRHMKIH. The segment at 127-169 is disordered; it reads IHEKDPNSTASTTPPSPLKAKRLSSKRKFSQDAEMDREERTPA. The segment covering 145–154 has biased composition (basic residues); that stretch reads KAKRLSSKRK. C2H2-type zinc fingers lie at residues 189–211, 216–239, and 297–319; these read YHCPVCFKDFFCKYALESHMETH, LRCDICCITFRTHRGLLRHNAVIH, and FICETCNKAFPMLLALKLHTETH. Residues 511-556 form a disordered region; it reads SAQQASPGCISPSLPPPPLRLIKNSVETSSNSHLSQPGAKSSPSSQ. The span at 535 to 549 shows a compositional bias: polar residues; that stretch reads SVETSSNSHLSQPGA. 4 consecutive C2H2-type zinc fingers follow at residues 622 to 644, 650 to 672, 732 to 754, and 763 to 788; these read YPCRFCDQVFAFSGVLRAHIRSH, YQCNICDYIAADKAALIRHLRTH, TVCKLCGEDLKHYRALRIHMRTH, and FECKECGTAFSAKRNCIHHILKQHLH. Disordered stretches follow at residues 1025-1044, 1058-1104, and 1123-1162; these read AADASPKAASSSTGCDKSGN, DSNL…VDLE, and KFSPFLQSTDNFKEESGQNGTSEDEKETPEDKLLRGKRNT. Residues 1026 to 1036 show a composition bias toward low complexity; it reads ADASPKAASSS. Over residues 1082 to 1095 the composition is skewed to basic residues; sequence TKKRGRKKGTKNKP. Positions 1123-1132 are enriched in polar residues; the sequence is KFSPFLQSTD. The segment at 1170–1192 adopts a C2H2-type 11 zinc-finger fold; that stretch reads ITCPYCPRVFSWASSLQRHMLTH. Disordered regions lie at residues 1214–1269 and 1313–1418; these read CEKE…KSLD and LSRH…DKRK. Residues 1242–1262 show a composition bias toward acidic residues; that stretch reads PAEEDAEEKADEYEEGPEEDS. The C2H2-type 12 zinc-finger motif lies at 1298-1320; sequence HACDVCGKTFKFAGALSRHKKAH. Basic and acidic residues-rich tracts occupy residues 1321–1339 and 1388–1414; these read IREDRKDERSSEDESKSIQ and GTERKSTEKSSDDKIPKTDEAKSTAKA. 2 C2H2-type zinc fingers span residues 1419–1441 and 1447–1469; these read KVCTVCNKRFWSLQDLTRHMRSH and YKCQTCERTFTLKHSLVRHQRIH. The span at 1464 to 1477 shows a compositional bias: basic residues; it reads RHQRIHQKVKNTRN. Positions 1464-1585 are disordered; it reads RHQRIHQKVK…SELERPSGFI (122 aa). Composition is skewed to basic and acidic residues over residues 1478-1493 and 1566-1580; these read HGKESDKEETQSRCGE and PAKDQEPRGSSELER.

It belongs to the krueppel C2H2-type zinc-finger protein family. In terms of tissue distribution, broadly expressed, except in brain.

It localises to the nucleus. Its function is as follows. Transcription factor that binds specifically to the RAS-responsive elements (RRE) of gene promoters. The chain is Ras-responsive element-binding protein 1 (RREB1) from Gallus gallus (Chicken).